A 98-amino-acid chain; its full sequence is Citrate lyase acyl carrier protein (98 aa).

The residue at position 14 (Ser14) is an O-(phosphoribosyl dephospho-coenzyme A)serine.

The protein belongs to the CitD family. Oligomer with a subunit composition of (alpha,beta,gamma)6.

The protein resides in the cytoplasm. Covalent carrier of the coenzyme of citrate lyase. In Vibrio cholerae serotype O1 (strain ATCC 39315 / El Tor Inaba N16961), this protein is Citrate lyase acyl carrier protein.